The chain runs to 273 residues: Putative phosphoenolpyruvate synthase regulatory protein (273 aa).

Glycine 154–threonine 161 serves as a coordination point for ADP.

Belongs to the pyruvate, phosphate/water dikinase regulatory protein family. PSRP subfamily.

It carries out the reaction [pyruvate, water dikinase] + ADP = [pyruvate, water dikinase]-phosphate + AMP + H(+). The enzyme catalyses [pyruvate, water dikinase]-phosphate + phosphate + H(+) = [pyruvate, water dikinase] + diphosphate. Bifunctional serine/threonine kinase and phosphorylase involved in the regulation of the phosphoenolpyruvate synthase (PEPS) by catalyzing its phosphorylation/dephosphorylation. The chain is Putative phosphoenolpyruvate synthase regulatory protein from Neisseria meningitidis serogroup B (strain ATCC BAA-335 / MC58).